A 305-amino-acid polypeptide reads, in one-letter code: Methionyl-tRNA formyltransferase (305 aa).

110–113 (SLLP) is a binding site for (6S)-5,6,7,8-tetrahydrofolate.

Belongs to the Fmt family.

The enzyme catalyses L-methionyl-tRNA(fMet) + (6R)-10-formyltetrahydrofolate = N-formyl-L-methionyl-tRNA(fMet) + (6S)-5,6,7,8-tetrahydrofolate + H(+). Its function is as follows. Attaches a formyl group to the free amino group of methionyl-tRNA(fMet). The formyl group appears to play a dual role in the initiator identity of N-formylmethionyl-tRNA by promoting its recognition by IF2 and preventing the misappropriation of this tRNA by the elongation apparatus. The protein is Methionyl-tRNA formyltransferase of Ureaplasma urealyticum serovar 10 (strain ATCC 33699 / Western).